Reading from the N-terminus, the 336-residue chain is F-box protein PP2-B1 (336 aa).

The interval 1-22 is disordered; that stretch reads MEQIHGGDSNSGGGGGGSSRND. The segment covering 9 to 18 has biased composition (gly residues); the sequence is SNSGGGGGGS. The region spanning 29 to 75 is the F-box domain; it reads ASRFDALPEDCISKVISHTSPRDACVVASVSKSVKSAAQSDLVWEMF.

In terms of assembly, part of a SCF (ASK-cullin-F-box) protein ligase complex. Interacts with SKP1A/ASK1 and SPK1B/ASK2.

The protein localises to the nucleus. The protein operates within protein modification; protein ubiquitination. Functionally, component of SCF(ASK-cullin-F-box) E3 ubiquitin ligase complexes, which may mediate the ubiquitination and subsequent proteasomal degradation of target proteins. The polypeptide is F-box protein PP2-B1 (PP2B1) (Arabidopsis thaliana (Mouse-ear cress)).